The chain runs to 1029 residues: Ig-like and fibronectin type-III domain-containing protein 1 (1029 aa).

The signal sequence occupies residues M1–A22. Residues E23–S918 are Extracellular-facing. 4 N-linked (GlcNAc...) asparagine glycosylation sites follow: N36, N93, N120, and N165. A Fibronectin type-III 1 domain is found at A90–T181. One can recognise a WR1 domain in the interval P185–P227. N-linked (GlcNAc...) asparagine glycans are attached at residues N257, N374, N409, N442, N482, N507, and N552. Fibronectin type-III domains are found at residues A330–A417 and A427–D523. The 92-residue stretch at A619–I710 folds into the Ig-like C2-type domain. Cysteines 640 and 693 form a disulfide. N753 is a glycosylation site (N-linked (GlcNAc...) asparagine). The Fibronectin type-III 4 domain occupies A817–R909. A helical transmembrane segment spans residues A919–L939. Residues S940–T1029 are Cytoplasmic-facing. A disordered region spans residues S988–G1021. The span at Q998 to D1013 shows a compositional bias: polar residues.

The protein localises to the cell membrane. This Caenorhabditis elegans protein is Ig-like and fibronectin type-III domain-containing protein 1.